The sequence spans 382 residues: Galactokinase (382 aa).

34–37 (EHTD) provides a ligand contact to substrate. 124–130 (GAGLSSS) lines the ATP pocket. Ser130 and Glu162 together coordinate Mg(2+). Asp174 functions as the Proton acceptor in the catalytic mechanism. Tyr223 is a substrate binding site.

The protein belongs to the GHMP kinase family. GalK subfamily.

The protein resides in the cytoplasm. It catalyses the reaction alpha-D-galactose + ATP = alpha-D-galactose 1-phosphate + ADP + H(+). It participates in carbohydrate metabolism; galactose metabolism. Functionally, catalyzes the transfer of the gamma-phosphate of ATP to D-galactose to form alpha-D-galactose-1-phosphate (Gal-1-P). The chain is Galactokinase from Shigella dysenteriae serotype 1 (strain Sd197).